Consider the following 122-residue polypeptide: Replication termination protein (122 aa).

Homodimer.

In terms of biological role, plays a role in DNA replication and termination (fork arrest mechanism). Two dimers of rtp bind to the two inverted repeat regions (IRI and IRII) present in the termination site. The binding of each dimer is centered on an 8 bp direct repeat. This Bacillus spizizenii (strain ATCC 23059 / NRRL B-14472 / W23) (Bacillus subtilis subsp. spizizenii) protein is Replication termination protein (rtp).